The chain runs to 248 residues: Clathrin light chain A (248 aa).

The segment at 1 to 93 (MAELDPFGAP…YQESNGPTDS (93 aa)) is disordered. A compositionally biased stretch (gly residues) spans 13 to 25 (APGGPALGNGVAG). An involved in binding clathrin heavy chain region spans residues 100–162 (VDRLQSEPES…QLQKTKASNR (63 aa)). Residues Ser-105 and Ser-206 each carry the phosphoserine modification. The residue at position 223 (Lys-223) is an N6-acetyllysine. Phosphoserine is present on Ser-236. The residue at position 242 (Lys-242) is an N6-acetyllysine.

It belongs to the clathrin light chain family. In terms of assembly, clathrin coats are formed from molecules containing 3 heavy chains and 3 light chains. Interacts with CALY; the interaction stimulates clathrin self-assembly and clathrin-mediated endocytosis. Interacts with CKAP5 and TACC3 forming the TACC3/ch-TOG/clathrin complex located at spindle inter-microtubules bridges; the complex implicates clathrin triskelions.

It is found in the cytoplasmic vesicle membrane. The protein localises to the membrane. Its subcellular location is the coated pit. The protein resides in the cytoplasm. It localises to the cytoskeleton. It is found in the spindle. Clathrin is the major protein of the polyhedral coat of coated pits and vesicles. Acts as a component of the TACC3/ch-TOG/clathrin complex proposed to contribute to stabilization of kinetochore fibers of the mitotic spindle by acting as inter-microtubule bridge. The chain is Clathrin light chain A (Clta) from Rattus norvegicus (Rat).